The following is a 241-amino-acid chain: MSRAPLPLRDDERLIFALDVPDRAQALEWVDRLGDSVAFYKIGMELLASGEYFQVLDELARRDKRVFVDLKFFDIPATAAAVIKRLSQWPVSYATIHGWHPAMMEACAAANSSDMRLLAVTVLTSMGRPDLAQMGIDREPVDVVVERALAAQAAGIDGVIASGQEAGPIRAATGAGFSIVCPGIRPGGPVGDDQKRTVGVAQAFADGADAIVVGRPIRLATDPQAAARAIQQEIASALAAR.

Residues Asp-19, Lys-41, 69–78 (DLKFFDIPAT), Thr-124, Arg-185, Gln-194, Gly-214, and Arg-215 each bind substrate. Lys-71 serves as the catalytic Proton donor.

It belongs to the OMP decarboxylase family. Type 1 subfamily. As to quaternary structure, homodimer.

It catalyses the reaction orotidine 5'-phosphate + H(+) = UMP + CO2. It participates in pyrimidine metabolism; UMP biosynthesis via de novo pathway; UMP from orotate: step 2/2. In terms of biological role, catalyzes the decarboxylation of orotidine 5'-monophosphate (OMP) to uridine 5'-monophosphate (UMP). This Stenotrophomonas maltophilia (strain K279a) protein is Orotidine 5'-phosphate decarboxylase.